Consider the following 330-residue polypeptide: DNA-directed RNA polymerase subunit alpha (330 aa).

The interval 1–237 (MYTEINEMLT…RQLHAFVDMK (237 aa)) is alpha N-terminal domain (alpha-NTD). An alpha C-terminal domain (alpha-CTD) region spans residues 251-330 (FDPVLLRSVD…ENWPPASLGE (80 aa)).

Belongs to the RNA polymerase alpha chain family. Homodimer. The RNAP catalytic core consists of 2 alpha, 1 beta, 1 beta' and 1 omega subunit. When a sigma factor is associated with the core the holoenzyme is formed, which can initiate transcription.

It carries out the reaction RNA(n) + a ribonucleoside 5'-triphosphate = RNA(n+1) + diphosphate. Its function is as follows. DNA-dependent RNA polymerase catalyzes the transcription of DNA into RNA using the four ribonucleoside triphosphates as substrates. The protein is DNA-directed RNA polymerase subunit alpha of Legionella pneumophila (strain Corby).